We begin with the raw amino-acid sequence, 880 residues long: Beta-N-acetylglucosaminidase (880 aa).

A signal peptide spans 1–27 (MKKRLIAPMLLSAASLAFFAMSGSAQA). SPOR domains are found at residues 70 to 149 (SGTT…VKAY), 150 to 229 (GAAQ…LKET), and 230 to 311 (VKGQ…YQQV). 2 tandem repeats follow at residues 439–473 (ITTE…GQTA) and 479–513 (ITTE…GQTA). Residues 630–700 (TATSTVTADV…VDPNNFSRDS (71 aa)) form the SH3b domain.

Belongs to the glycosyl hydrolase 73 family. Homodimer.

It is found in the secreted. The protein resides in the cell wall. The catalysed reaction is an N(4)-(oligosaccharide-(1-&gt;3)-[oligosaccharide-(1-&gt;6)]-beta-D-Man-(1-&gt;4)-beta-D-GlcNAc-(1-&gt;4)-alpha-D-GlcNAc)-L-asparaginyl-[protein] + H2O = an oligosaccharide-(1-&gt;3)-[oligosaccharide-(1-&gt;6)]-beta-D-Man-(1-&gt;4)-D-GlcNAc + N(4)-(N-acetyl-beta-D-glucosaminyl)-L-asparaginyl-[protein]. Its activity is regulated as follows. Inhibited by diethyl pyrocarbonate, slightly by EDTA. Not inhibited by PMSF, diisopropyl fluorophosphate, 2-mercaptoethanol or N-ethylmaleimide. Functionally, cell wall hydrolase not involved in cell autolysis, competence, sporulation or germination. It hydrolyzes the beta-1,4 glycan bond between the N-acetylglucosaminyl and the N-acetylmuramoyl residues in the glycan chain. In Bacillus subtilis (strain 168), this protein is Beta-N-acetylglucosaminidase (lytD).